Here is a 327-residue protein sequence, read N- to C-terminus: Phenylalanine--tRNA ligase alpha subunit (327 aa).

Residue glutamate 252 coordinates Mg(2+).

The protein belongs to the class-II aminoacyl-tRNA synthetase family. Phe-tRNA synthetase alpha subunit type 1 subfamily. In terms of assembly, tetramer of two alpha and two beta subunits. Requires Mg(2+) as cofactor.

Its subcellular location is the cytoplasm. It catalyses the reaction tRNA(Phe) + L-phenylalanine + ATP = L-phenylalanyl-tRNA(Phe) + AMP + diphosphate + H(+). The sequence is that of Phenylalanine--tRNA ligase alpha subunit from Hamiltonella defensa subsp. Acyrthosiphon pisum (strain 5AT).